The sequence spans 843 residues: Protein P (843 aa).

Positions 1–177 (MPLSYPHFRK…FCGSPYSWEQ (177 aa)) are terminal protein domain (TP). Residues 178–346 (ELQHGSTSLN…YCLSHIINLL (169 aa)) form a spacer region. Residues 284 to 308 (EANPSLSTSKRHTSTGNAVELNPVP) are disordered. The polymerase/reverse transcriptase domain (RT) stretch occupies residues 347-690 (EDWGPCYEHG…YMNLYPVARQ (344 aa)). A Reverse transcriptase domain is found at 357 to 600 (QHHIRTPRTP…YNLHFMGYVI (244 aa)). Aspartate 429, aspartate 551, and aspartate 552 together coordinate Mg(2+).

It belongs to the hepadnaviridae P protein family.

It catalyses the reaction DNA(n) + a 2'-deoxyribonucleoside 5'-triphosphate = DNA(n+1) + diphosphate. The catalysed reaction is Endonucleolytic cleavage to 5'-phosphomonoester.. With respect to regulation, activated by host HSP70 and HSP40 in vitro to be able to bind the epsilon loop of the pgRNA. Because deletion of the RNase H region renders the protein partly chaperone-independent, the chaperones may be needed indirectly to relieve occlusion of the RNA-binding site by this domain. Inhibited by several reverse-transcriptase inhibitors: Lamivudine, Adefovir and Entecavir. Multifunctional enzyme that converts the viral RNA genome into dsDNA in viral cytoplasmic capsids. This enzyme displays a DNA polymerase activity that can copy either DNA or RNA templates, and a ribonuclease H (RNase H) activity that cleaves the RNA strand of RNA-DNA heteroduplexes in a partially processive 3'- to 5'-endonucleasic mode. Neo-synthesized pregenomic RNA (pgRNA) are encapsidated together with the P protein, and reverse-transcribed inside the nucleocapsid. Initiation of reverse-transcription occurs first by binding the epsilon loop on the pgRNA genome, and is initiated by protein priming, thereby the 5'-end of (-)DNA is covalently linked to P protein. Partial (+)DNA is synthesized from the (-)DNA template and generates the relaxed circular DNA (RC-DNA) genome. After budding and infection, the RC-DNA migrates in the nucleus, and is converted into a plasmid-like covalently closed circular DNA (cccDNA). The activity of P protein does not seem to be necessary for cccDNA generation, and is presumably released from (+)DNA by host nuclear DNA repair machinery. In Homo sapiens (Human), this protein is Protein P.